The following is a 561-amino-acid chain: Terpene synthase 3 (561 aa).

Mg(2+)-binding residues include Asp315, Asp319, Asp458, and Glu466. The DDXXD motif signature appears at 315–319 (DDVYD).

This sequence belongs to the terpene synthase family. Tpsa subfamily. It depends on Mg(2+) as a cofactor. Requires Mn(2+) as cofactor. In terms of tissue distribution, mostly expressed in stems amd leaves, and, to a lower extent, in roots and fruits.

It carries out the reaction (2E,6E)-farnesyl diphosphate = germacrene D + diphosphate. The catalysed reaction is (2E,6E)-farnesyl diphosphate = alpha-copaene + diphosphate. Its pathway is secondary metabolite biosynthesis; terpenoid biosynthesis. Its function is as follows. Sesquiterpene synthase involved in the biosynthesis of volatile compounds that contribute to the characteristic flavors of black pepper. Mediates the conversion of (2E,6E)-farnesyl diphosphate (FPP) into alpha-copaene and germacrene D. This Piper nigrum (Black pepper) protein is Terpene synthase 3.